Here is a 143-residue protein sequence, read N- to C-terminus: Transcriptional regulator MraZ (143 aa).

SpoVT-AbrB domains are found at residues 5 to 47 and 76 to 119; these read EFEH…PLSE and AVQC…NKAR.

It belongs to the MraZ family. In terms of assembly, forms oligomers.

The protein localises to the cytoplasm. Its subcellular location is the nucleoid. This is Transcriptional regulator MraZ from Pediococcus pentosaceus (strain ATCC 25745 / CCUG 21536 / LMG 10740 / 183-1w).